Here is a 694-residue protein sequence, read N- to C-terminus: Zinc finger BED domain-containing protein 5 (694 aa).

The BED-type zinc-finger motif lies at 109 to 165 (RKYDESYLSFGFTYFGNRDAPHAQCVLCKKILSNSSLAPSKLRRHLETKHAAYKDKD). Residues Cys-133, Cys-136, His-153, and His-158 each coordinate Zn(2+).

This is Zinc finger BED domain-containing protein 5 (ZBED5) from Canis lupus familiaris (Dog).